Consider the following 37-residue polypeptide: Large ribosomal subunit protein bL36 (37 aa).

It belongs to the bacterial ribosomal protein bL36 family.

The sequence is that of Large ribosomal subunit protein bL36 from Caldanaerobacter subterraneus subsp. tengcongensis (strain DSM 15242 / JCM 11007 / NBRC 100824 / MB4) (Thermoanaerobacter tengcongensis).